The sequence spans 306 residues: Embryogenic cell protein 40 (306 aa).

3 disordered regions span residues 1 to 57 (MADL…ASHG), 80 to 171 (AATH…GGLG), and 188 to 306 (GTGI…PTSH). Over residues 12–23 (IQLTDQHGNPVQ) the composition is skewed to polar residues. Over residues 32 to 44 (VHITGVATTGATT) the composition is skewed to low complexity. Gly residues-rich tracts occupy residues 85–119 (GSHG…GTGT), 127–151 (GPTG…GTGV), and 159–171 (GPTG…GGLG). Residues 194–204 (GSAPASAGSHS) show a composition bias toward low complexity. Composition is skewed to basic and acidic residues over residues 205–218 (HAPE…EQLH) and 243–259 (KIKE…DEHT). Positions 260-278 (TVATTKTTTAAHPGGAAVA) are enriched in low complexity. Residues 279–298 (VEHHEHEKKSMLDKIKDKLP) show a composition bias toward basic and acidic residues.

This sequence belongs to the plant dehydrin family.

The polypeptide is Embryogenic cell protein 40 (ECP40) (Daucus carota (Wild carrot)).